Reading from the N-terminus, the 626-residue chain is DNA primase (626 aa).

Residues 39–63 (CPFHGEKTPSFSVSPEKQIFHCFGC) form a CHC2-type zinc finger. The Toprim domain maps to 264-346 (EEITLMEGFM…DVFVLQLPAG (83 aa)). Mg(2+)-binding residues include E270, D314, and D316.

Belongs to the DnaG primase family. As to quaternary structure, monomer. Interacts with DnaB. Zn(2+) serves as cofactor. Requires Mg(2+) as cofactor.

The catalysed reaction is ssDNA + n NTP = ssDNA/pppN(pN)n-1 hybrid + (n-1) diphosphate.. In terms of biological role, RNA polymerase that catalyzes the synthesis of short RNA molecules used as primers for DNA polymerase during DNA replication. The chain is DNA primase from Listeria innocua serovar 6a (strain ATCC BAA-680 / CLIP 11262).